Here is a 392-residue protein sequence, read N- to C-terminus: Protein O-glucosyltransferase 1 (392 aa).

The signal sequence occupies residues 1–23 (MERRAGSRLRAWMLLLLLCPVQG). Intrachain disulfides connect cysteine 49–cysteine 56, cysteine 54–cysteine 357, cysteine 102–cysteine 108, and cysteine 263–cysteine 286. Asparagine 53 carries N-linked (GlcNAc...) asparagine glycosylation. The tract at residues 103–107 (MFPSR) is interaction with the consensus sequence C-X-S-X-[PA]-C in peptide substrates. Aspartate 133 acts as the Proton donor/acceptor in catalysis. The segment at 172–178 (AVWPLYP) is interaction with the consensus sequence C-X-S-X-[PA]-C in peptide substrates. Tyrosine 177 is a binding site for UDP-alpha-D-glucose. Asparagine 204 carries N-linked (GlcNAc...) asparagine glycosylation. UDP-alpha-D-glucose-binding positions include serine 212, arginine 218, and 274 to 279 (VAASFR). Asparagine 373 is a glycosylation site (N-linked (GlcNAc...) asparagine). Positions 389 to 392 (KTEL) match the Prevents secretion from ER motif.

Belongs to the glycosyltransferase 90 family. As to expression, widely expressed in newborn and adult tissues (at protein level).

It is found in the endoplasmic reticulum lumen. It carries out the reaction L-seryl-[EGF-like domain protein] + UDP-alpha-D-xylose = 3-O-(beta-D-xylosyl)-L-seryl-[EGF-like domain protein] + UDP + H(+). It catalyses the reaction L-seryl-[EGF-like domain protein] + UDP-alpha-D-glucose = 3-O-(beta-D-glucosyl)-L-seryl-[EGF-like domain protein] + UDP + H(+). The protein operates within protein modification; protein glycosylation. Functionally, dual specificity glycosyltransferase that catalyzes the transfer of glucose and xylose from UDP-glucose and UDP-xylose, respectively, to a serine residue found in the consensus sequence of C-X-S-X-P-C. Specifically targets extracellular EGF repeats of protein such as CRB2, F7, F9 and NOTCH2. Acts as a positive regulator of Notch signaling by mediating O-glucosylation of Notch, leading to regulate muscle development. Notch glucosylation does not affect Notch ligand binding. Required during early development to promote gastrulation: acts by mediating O-glucosylation of CRB2, which is required for CRB2 localization to the cell membrane. The polypeptide is Protein O-glucosyltransferase 1 (Mus musculus (Mouse)).